Consider the following 1134-residue polypeptide: Myosin-4 (1134 aa).

In terms of domain architecture, Myosin N-terminal SH3-like spans 110 to 160; sequence REKLCVWCRVAANGQWHLGKIHSTSSSDDVCVMLSANDDVRTMEEIFPANP. The Myosin motor domain occupies 164–830; the sequence is EGVEDLTQLS…VISVLEERKK (667 aa). ATP is bound by residues 255-262 and 304-312; these read GESGAGKT and NDNSSRFGK. Actin-binding stretches follow at residues 589–623 and 710–732; these read LIEKKPIGLVSLLNEESNFPKATDTTFANKLKQHL and LFKLMNKLEDTTPHFIRCIKPNS. 3 IQ domains span residues 832–861, 855–884, and 891–920; these read VLRGILGLQKQFRGYQTREYFHNMRNAAVI, MRNAAVILQSYIRGENARRNYIVVGESAIV, and ELDAAIHLQYMVRKWLARKLLNSTQQKNKP. The interval 913-939 is disordered; the sequence is STQQKNKPRNEKKKTRRKSTKRVSEDK. The segment covering 918-933 has biased composition (basic residues); sequence NKPRNEKKKTRRKSTK. The stretch at 953–999 forms a coiled coil; sequence LADLQSRVLKVEAAIMQKEDENTALQEELQRFEERWLENETRMKSME.

The protein belongs to the TRAFAC class myosin-kinesin ATPase superfamily. Myosin family. Plant myosin class VIII subfamily. As to quaternary structure, homodimer.

Myosin heavy chain that is required for the cell cycle-regulated transport of various organelles and proteins for their segregation. Functions by binding with its tail domain to receptor proteins on organelles and exerting force with its N-terminal motor domain against actin filaments, thereby transporting its cargo along polarized actin cables. The polypeptide is Myosin-4 (VIII-B) (Arabidopsis thaliana (Mouse-ear cress)).